The following is a 318-amino-acid chain: Pyrimidine-specific ribonucleoside hydrolase RihA (318 aa).

H240 is a catalytic residue.

Belongs to the IUNH family. RihA subfamily.

Functionally, hydrolyzes cytidine or uridine to ribose and cytosine or uracil, respectively. The chain is Pyrimidine-specific ribonucleoside hydrolase RihA from Shewanella sp. (strain MR-7).